Consider the following 75-residue polypeptide: Neuropeptide-like protein 31 (75 aa).

The N-terminal stretch at 1–22 (MISTSSILVLVVLLACFMAANA) is a signal peptide. Tyr-29, Tyr-39, Tyr-49, Tyr-56, and Tyr-64 each carry tyrosine amide. The residue at position 73 (Trp-73) is a Tryptophan amide.

The protein belongs to the YARP (YGGW-amide related peptide) family. In terms of tissue distribution, expressed in hypoderm.

Its subcellular location is the secreted. Antimicrobial peptides that have antifungal activity against D.coniospora. Has weak antibacterial activity against Gram-positive bacteria M.luteus and Gram-negative E.coli. The sequence is that of Neuropeptide-like protein 31 (nlp-31) from Caenorhabditis elegans.